The following is a 320-amino-acid chain: ATP-dependent 6-phosphofructokinase (320 aa).

Glycine 12 serves as a coordination point for ATP. Arginine 22–arginine 26 contributes to the ADP binding site. Residues arginine 73–phenylalanine 74 and glycine 103–serine 106 contribute to the ATP site. Aspartate 104 provides a ligand contact to Mg(2+). Threonine 126–aspartate 128 contributes to the substrate binding site. Aspartate 128 serves as the catalytic Proton acceptor. Arginine 155 lines the ADP pocket. Residues arginine 163 and methionine 170 to arginine 172 contribute to the substrate site. ADP contacts are provided by residues glycine 186–glutamate 188, lysine 212, and lysine 214–histidine 216. Substrate is bound by residues glutamate 223, arginine 244, and histidine 250–arginine 253.

This sequence belongs to the phosphofructokinase type A (PFKA) family. ATP-dependent PFK group I subfamily. Prokaryotic clade 'B1' sub-subfamily. Homotetramer. Mg(2+) serves as cofactor.

It is found in the cytoplasm. The catalysed reaction is beta-D-fructose 6-phosphate + ATP = beta-D-fructose 1,6-bisphosphate + ADP + H(+). Its pathway is carbohydrate degradation; glycolysis; D-glyceraldehyde 3-phosphate and glycerone phosphate from D-glucose: step 3/4. Allosterically activated by ADP and other diphosphonucleosides, and allosterically inhibited by phosphoenolpyruvate. Catalyzes the phosphorylation of D-fructose 6-phosphate to fructose 1,6-bisphosphate by ATP, the first committing step of glycolysis. The protein is ATP-dependent 6-phosphofructokinase of Edwardsiella ictaluri (strain 93-146).